The sequence spans 165 residues: Thiol peroxidase (165 aa).

Positions 18 to 164 (RKVGDKAPNF…YEAAIEAAKK (147 aa)) constitute a Thioredoxin domain. Residue cysteine 60 is the Cysteine sulfenic acid (-SOH) intermediate of the active site. A disulfide bridge links cysteine 60 with cysteine 94.

It belongs to the peroxiredoxin family. Tpx subfamily. Homodimer.

The catalysed reaction is a hydroperoxide + [thioredoxin]-dithiol = an alcohol + [thioredoxin]-disulfide + H2O. Functionally, thiol-specific peroxidase that catalyzes the reduction of hydrogen peroxide and organic hydroperoxides to water and alcohols, respectively. Plays a role in cell protection against oxidative stress by detoxifying peroxides. The polypeptide is Thiol peroxidase (Listeria monocytogenes serotype 4b (strain F2365)).